The following is a 215-amino-acid chain: Protein Thf1 (215 aa).

Residues 182 to 213 (ERMDQAVELVEETIAAEKRKKERRLEEQAQRT) adopt a coiled-coil conformation.

This sequence belongs to the THF1 family.

May be involved in photosynthetic membrane biogenesis. This Synechococcus sp. (strain CC9605) protein is Protein Thf1.